Consider the following 244-residue polypeptide: 3-oxoacyl-[acyl-carrier-protein] reductase FabG (244 aa).

Residues 12–15, Thr-37, 59–60, and Asn-86 contribute to the NADP(+) site; these read GASR and NV. Ser-138 contacts substrate. The active-site Proton acceptor is Tyr-151. NADP(+)-binding positions include 151 to 155 and Ile-184; that span reads YAAAK.

This sequence belongs to the short-chain dehydrogenases/reductases (SDR) family. In terms of assembly, homotetramer.

It catalyses the reaction a (3R)-hydroxyacyl-[ACP] + NADP(+) = a 3-oxoacyl-[ACP] + NADPH + H(+). It participates in lipid metabolism; fatty acid biosynthesis. Catalyzes the NADPH-dependent reduction of beta-ketoacyl-ACP substrates to beta-hydroxyacyl-ACP products, the first reductive step in the elongation cycle of fatty acid biosynthesis. The protein is 3-oxoacyl-[acyl-carrier-protein] reductase FabG (fabG) of Vibrio cholerae serotype O1 (strain ATCC 39315 / El Tor Inaba N16961).